Reading from the N-terminus, the 463-residue chain is tRNA modification GTPase MnmE (463 aa).

Arg-27, Glu-92, and Lys-131 together coordinate (6S)-5-formyl-5,6,7,8-tetrahydrofolate. One can recognise a TrmE-type G domain in the interval 234–386; sequence GIKLAIVGKP…LEDHLLKIYS (153 aa). Position 244 (Asn-244) interacts with K(+). Residues 244–249, 263–269, and 288–291 each bind GTP; these read NVGKSS, TNVAGTT, and DTAG. Ser-248 is a Mg(2+) binding site. K(+)-binding residues include Thr-263, Val-265, and Thr-268. Thr-269 serves as a coordination point for Mg(2+). Position 463 (Lys-463) interacts with (6S)-5-formyl-5,6,7,8-tetrahydrofolate.

This sequence belongs to the TRAFAC class TrmE-Era-EngA-EngB-Septin-like GTPase superfamily. TrmE GTPase family. In terms of assembly, homodimer. Heterotetramer of two MnmE and two MnmG subunits. K(+) serves as cofactor.

Its subcellular location is the cytoplasm. Functionally, exhibits a very high intrinsic GTPase hydrolysis rate. Involved in the addition of a carboxymethylaminomethyl (cmnm) group at the wobble position (U34) of certain tRNAs, forming tRNA-cmnm(5)s(2)U34. This Mycoplasmopsis synoviae (strain 53) (Mycoplasma synoviae) protein is tRNA modification GTPase MnmE.